Here is a 275-residue protein sequence, read N- to C-terminus: Membrane protein insertase YidC 1 (275 aa).

The signal sequence occupies residues 1-25 (MRKVLRVKKNIKIARIVPLVLLLVA). Cys26 carries the N-palmitoyl cysteine lipid modification. Cys26 carries the S-diacylglycerol cysteine lipid modification. 5 helical membrane passes run 58–78 (SIGV…MPLF), 129–149 (YASL…FQAL), 171–191 (LYLL…LTNL), 198–216 (VMMT…FMGF), and 222–240 (VVLY…LLLL).

The protein belongs to the OXA1/ALB3/YidC family. Type 2 subfamily.

Its subcellular location is the cell membrane. In terms of biological role, required for the insertion and/or proper folding and/or complex formation of integral membrane proteins into the membrane. Involved in integration of membrane proteins that insert both dependently and independently of the Sec translocase complex, as well as at least some lipoproteins. The polypeptide is Membrane protein insertase YidC 1 (Streptococcus pyogenes serotype M6 (strain ATCC BAA-946 / MGAS10394)).